The chain runs to 167 residues: Photosystem II extrinsic protein V (167 aa).

The first 30 residues, 1-30 (MVFKTLRRTLWLTLAALLAVFQFNLGAAQA), serve as a signal peptide directing secretion. Heme c-binding residues include Cys-67, Cys-70, His-71, and His-122.

This sequence belongs to the cytochrome c family. PsbV subfamily. PSII is composed of 1 copy each of membrane proteins PsbA, PsbB, PsbC, PsbD, PsbE, PsbF, PsbH, PsbI, PsbJ, PsbK, PsbL, PsbM, PsbT, PsbX, PsbY, PsbZ, Psb30/Ycf12, peripheral proteins PsbO, CyanoQ (PsbQ), PsbU, PsbV and a large number of cofactors. It forms dimeric complexes. Heme c serves as cofactor.

It is found in the cellular thylakoid membrane. Its function is as follows. One of the extrinsic, lumenal subunits of photosystem II (PSII). PSII is a light-driven water plastoquinone oxidoreductase, using light energy to abstract electrons from H(2)O, generating a proton gradient subsequently used for ATP formation. The extrinsic proteins stabilize the structure of photosystem II oxygen-evolving complex (OEC), the ion environment of oxygen evolution and protect the OEC against heat-induced inactivation. Low-potential cytochrome c that plays a role in the OEC of PSII. This chain is Photosystem II extrinsic protein V, found in Synechococcus elongatus (strain ATCC 33912 / PCC 7942 / FACHB-805) (Anacystis nidulans R2).